The sequence spans 169 residues: Peptide deformylase (169 aa).

Residues Cys-91 and His-133 each contribute to the Fe cation site. Glu-134 is a catalytic residue. Residue His-137 participates in Fe cation binding.

This sequence belongs to the polypeptide deformylase family. Fe(2+) is required as a cofactor.

It carries out the reaction N-terminal N-formyl-L-methionyl-[peptide] + H2O = N-terminal L-methionyl-[peptide] + formate. In terms of biological role, removes the formyl group from the N-terminal Met of newly synthesized proteins. Requires at least a dipeptide for an efficient rate of reaction. N-terminal L-methionine is a prerequisite for activity but the enzyme has broad specificity at other positions. The protein is Peptide deformylase of Escherichia coli (strain SMS-3-5 / SECEC).